A 520-amino-acid chain; its full sequence is MSNKCDVIVVGGGISGMAAAKLLHDCGLSVVVLEARDRVGGRTYTIRNKNVKYVDLGGSYVGPTQNRILRLAKELGLETYKVNEVERLIHFVKGKSYAFRGPFPPVWNPITYLDYNNLWRTMDEMGQEIPSDAPWKAPLAEEWDYMTMKELLDKICWTNSTKQIATLFVNLCVTAETHEVSALWFLWYVKQCGGTTRIISTTNGGQERKFIGGSGQVSERIKDILGDRVKLERPVIHIDQTGENVVVKTLNHEIYEAKYVISAIPPVLGMKIHHSPPLPILRNQLITRVPLGSVIKCMVYYKEPFWRKKDFCGTMVIEGEEAPIAYTLDDTKPDGSCAAIMGFILAHKARKLVRLTKEERLRKLCELYAKVLNSQEALQPVHYEEKNWCEEQYSGGCYTAYFPPGILTQYGRVLRQPVGKIFFAGTETASHWSGYMEGAVEAGERAAREILHAIGKIPEDEIWQPEPESVDVPARPITNTFLERHLPSVPGLLKLLGLTTILSATALGFLAHKKGLFVRF.

Residue Ser-2 is modified to N-acetylserine. Topologically, residues 2–489 (SNKCDVIVVG…TFLERHLPSV (488 aa)) are cytoplasmic. Lys-52 bears the N6-acetyllysine mark. S-8alpha-FAD cysteine is present on Cys-397. A helical; Anchor for type IV membrane protein membrane pass occupies residues 490–516 (PGLLKLLGLTTILSATALGFLAHKKGL). Residues 517–520 (FVRF) lie on the Mitochondrial intermembrane side of the membrane.

The protein belongs to the flavin monoamine oxidase family. In terms of assembly, monomer, homo- or heterodimer (containing two subunits of similar size). Each subunit contains a covalently bound flavin. Enzymatically active as monomer. FAD is required as a cofactor.

It localises to the mitochondrion outer membrane. It catalyses the reaction a secondary aliphatic amine + O2 + H2O = a primary amine + an aldehyde + H2O2. The catalysed reaction is (R)-adrenaline + O2 + H2O = (R)-3,4-dihydroxymandelaldehyde + methylamine + H2O2. It carries out the reaction a primary methyl amine + O2 + H2O = an aldehyde + H2O2 + NH4(+). The enzyme catalyses dopamine + O2 + H2O = 3,4-dihydroxyphenylacetaldehyde + H2O2 + NH4(+). It catalyses the reaction tyramine + O2 + H2O = (4-hydroxyphenyl)acetaldehyde + H2O2 + NH4(+). The catalysed reaction is (R)-noradrenaline + O2 + H2O = (R)-3,4-dihydroxymandelaldehyde + H2O2 + NH4(+). It carries out the reaction benzylamine + O2 + H2O = benzaldehyde + H2O2 + NH4(+). The enzyme catalyses 2-phenylethylamine + O2 + H2O = 2-phenylacetaldehyde + H2O2 + NH4(+). It catalyses the reaction N-acetylputrescine + O2 + H2O = 4-acetamidobutanal + H2O2 + NH4(+). Its function is as follows. Catalyzes the oxidative deamination of primary and some secondary amines such as neurotransmitters, and exogenous amines including the tertiary amine, neurotoxin 1-methyl-4-phenyl-1,2,3,6-tetrahydropyridine (MPTP), with concomitant reduction of oxygen to hydrogen peroxide and participates in the metabolism of neuroactive and vasoactive amines in the central nervous system and peripheral tissues. Preferentially degrades benzylamine and phenylethylamine. In Rattus norvegicus (Rat), this protein is Amine oxidase [flavin-containing] B.